A 258-amino-acid chain; its full sequence is Meiotic drive suppressor wtf20 (258 aa).

A disordered region spans residues 1 to 71; it reads MKNNYTSLKS…GPTEIANPNV (71 aa). A compositionally biased stretch (basic and acidic residues) spans 19–30; sequence KTDHEIDLEKGL. The next 3 helical transmembrane spans lie at 84–106, 121–140, and 196–216; these read IYFL…TAWV, FSVT…FYFY, and SASA…AETV.

It belongs to the WTF family. As to quaternary structure, homomer. Interacts with other proteins that exhibit high sequence similarity.

It localises to the spore membrane. Its subcellular location is the vacuole membrane. Acts as a suppressor component of the dual wtf meiotic drive system, and can suppress but not confer meiotic drive by compatible poisons. Wtf meiotic drive systems promote unequal transmission of alleles from the parental zygote to progeny spores by encoding a poison and an antidote from the same locus; the poison is trans-acting and forms toxic aggregates in all spores within an ascus, wherease the antidote is spore-specific and targets aggregates for degradation by the vacuole. Meiotic drive by wtf systems therefore lead to poisoning of all progeny that do not inherit the dual poison/antidote allele, or express a compatible antidote. This chain is Meiotic drive suppressor wtf20, found in Schizosaccharomyces pombe (strain 972 / ATCC 24843) (Fission yeast).